A 291-amino-acid chain; its full sequence is Probable endonuclease 4 (291 aa).

Zn(2+) contacts are provided by histidine 72, histidine 112, glutamate 147, aspartate 181, histidine 184, histidine 215, aspartate 228, histidine 230, and glutamate 260.

Belongs to the AP endonuclease 2 family. It depends on Zn(2+) as a cofactor.

It carries out the reaction Endonucleolytic cleavage to 5'-phosphooligonucleotide end-products.. Endonuclease IV plays a role in DNA repair. It cleaves phosphodiester bonds at apurinic or apyrimidinic (AP) sites, generating a 3'-hydroxyl group and a 5'-terminal sugar phosphate. This chain is Probable endonuclease 4, found in Mycoplasma genitalium (strain ATCC 33530 / DSM 19775 / NCTC 10195 / G37) (Mycoplasmoides genitalium).